A 514-amino-acid chain; its full sequence is Membrane-bound lytic murein transglycosylase F (514 aa).

The signal sequence occupies residues 1–30 (MKKLKINYLFIGILTLLLAAALWPSIPWFG). The interval 31–269 (KTENHIAAIQ…RIEEKYLGHG (239 aa)) is non-LT domain. The segment at 270-514 (DDFDYVDTRS…LFTPQKKEEK (245 aa)) is LT domain. The active site involves E314.

It in the N-terminal section; belongs to the bacterial solute-binding protein 3 family. This sequence in the C-terminal section; belongs to the transglycosylase Slt family.

Its subcellular location is the cell outer membrane. The catalysed reaction is Exolytic cleavage of the (1-&gt;4)-beta-glycosidic linkage between N-acetylmuramic acid (MurNAc) and N-acetylglucosamine (GlcNAc) residues in peptidoglycan, from either the reducing or the non-reducing ends of the peptidoglycan chains, with concomitant formation of a 1,6-anhydrobond in the MurNAc residue.. Murein-degrading enzyme that degrades murein glycan strands and insoluble, high-molecular weight murein sacculi, with the concomitant formation of a 1,6-anhydromuramoyl product. Lytic transglycosylases (LTs) play an integral role in the metabolism of the peptidoglycan (PG) sacculus. Their lytic action creates space within the PG sacculus to allow for its expansion as well as for the insertion of various structures such as secretion systems and flagella. This chain is Membrane-bound lytic murein transglycosylase F, found in Salmonella paratyphi B (strain ATCC BAA-1250 / SPB7).